Consider the following 992-residue polypeptide: Leucine-rich repeat receptor-like serine/threonine-protein kinase BAM3 (992 aa).

The signal sequence occupies residues 1 to 21 (MADKIFTFFLILSSISPLLCS). At 22 to 656 (SLISPLNLSL…ARSRGEISAK (635 aa)) the chain is on the extracellular side. N28 carries N-linked (GlcNAc...) asparagine glycosylation. Cysteines 64 and 71 form a disulfide. N-linked (GlcNAc...) asparagine glycosylation is found at N75 and N87. LRR repeat units follow at residues 75–99 (NQSI…ISRL), 100–124 (SPSL…IYEL), 126–148 (GLEV…GFSQ), 150–173 (TQLV…LTTL), 174–199 (TRLE…SFLS), and 201–221 (KFLS…LANI). N131 and N163 each carry an N-linked (GlcNAc...) asparagine glycan. N-linked (GlcNAc...) asparagine glycosylation is present at N220. The CLE45 peptide binding signature appears at 226–231 (QLYLGY). 15 LRR repeats span residues 246–270 (LINL…LGNL), 271–294 (KNLE…LGNM), 296–320 (SLKT…GLQK), 322–342 (QLFN…VSEL), 343–366 (PDLQ…LGSN), 368–391 (NLIE…CFGR), 393–414 (LKIL…LGQC), 415–438 (EPLW…LIYL), 439–462 (PNLS…EAGN), 465–489 (FSSL…IRNL), 491–513 (SLQI…IGSL), 514–536 (KSLL…EFGD), 537–561 (CMSL…ISQI), 563–585 (ILNY…LGYM), and 586–610 (KSLT…QFSY). 2 N-linked (GlcNAc...) asparagine glycosylation sites follow: N256 and N293. The N-linked (GlcNAc...) asparagine glycan is linked to N354. Residues N440 and N472 are each glycosylated (N-linked (GlcNAc...) asparagine). N525 carries N-linked (GlcNAc...) asparagine glycosylation. 6 N-linked (GlcNAc...) asparagine glycosylation sites follow: N568, N575, N597, N613, N631, and N635. A helical transmembrane segment spans residues 657–677 (FKLFFGLGLLGFFLVFVVLAV). Residues 678 to 992 (VKNRRMRKNN…ISQAKQPNTF (315 aa)) lie on the Cytoplasmic side of the membrane. The region spanning 710–992 (VKENHVIGKG…ISQAKQPNTF (283 aa)) is the Protein kinase domain. Residues 716–724 (IGKGGRGIV) and K738 each bind ATP. The Proton acceptor role is filled by D836.

The protein belongs to the protein kinase superfamily. Ser/Thr protein kinase family. In terms of assembly, interacts with CLE45, especially in roots. Binds to the dimer CLV2/CRN. As to expression, expressed in seedlings, roots, leaves, stems, inflorescences, flowers and siliques. In roots, confined to protophloem and sieve element precursor cells.

The protein localises to the cell membrane. It localises to the endoplasmic reticulum membrane. The catalysed reaction is L-seryl-[protein] + ATP = O-phospho-L-seryl-[protein] + ADP + H(+). The enzyme catalyses L-threonyl-[protein] + ATP = O-phospho-L-threonyl-[protein] + ADP + H(+). Functionally, necessary for male gametophyte development, as well as ovule specification and function. Required for the development of high-ordered vascular strands within the leaf and a correlated control of leaf shape, size and symmetry. LRR-rich receptor-like kinase (LRR-RLK) involved in the perception of CLE45 peptide ligand which mediates root growth inhibition by repressing protophloem differentiation; this mechanism requires CRN. BRX, BAM3, and CLE45 act together to regulate the transition of protophloem cells from proliferation to differentiation, thus impinging on postembryonic growth capacity of the root meristem. Necessary for CLE45 peptide-triggered accumulation of MAKR5 in developing sieve elements. In Arabidopsis thaliana (Mouse-ear cress), this protein is Leucine-rich repeat receptor-like serine/threonine-protein kinase BAM3.